Consider the following 216-residue polypeptide: Imidazole glycerol phosphate synthase subunit HisH (216 aa).

In terms of domain architecture, Glutamine amidotransferase type-1 spans 5–213; the sequence is RLAVIDYDAG…VEFVARRLPA (209 aa). The active-site Nucleophile is the Cys83. Active-site residues include His188 and Glu190.

Heterodimer of HisH and HisF.

Its subcellular location is the cytoplasm. The enzyme catalyses 5-[(5-phospho-1-deoxy-D-ribulos-1-ylimino)methylamino]-1-(5-phospho-beta-D-ribosyl)imidazole-4-carboxamide + L-glutamine = D-erythro-1-(imidazol-4-yl)glycerol 3-phosphate + 5-amino-1-(5-phospho-beta-D-ribosyl)imidazole-4-carboxamide + L-glutamate + H(+). The catalysed reaction is L-glutamine + H2O = L-glutamate + NH4(+). Its pathway is amino-acid biosynthesis; L-histidine biosynthesis; L-histidine from 5-phospho-alpha-D-ribose 1-diphosphate: step 5/9. In terms of biological role, IGPS catalyzes the conversion of PRFAR and glutamine to IGP, AICAR and glutamate. The HisH subunit catalyzes the hydrolysis of glutamine to glutamate and ammonia as part of the synthesis of IGP and AICAR. The resulting ammonia molecule is channeled to the active site of HisF. The protein is Imidazole glycerol phosphate synthase subunit HisH of Synechococcus sp. (strain JA-3-3Ab) (Cyanobacteria bacterium Yellowstone A-Prime).